The chain runs to 638 residues: LIM domain kinase 2 (638 aa).

2 consecutive LIM zinc-binding domains span residues 12-63 (CQGC…CHKD) and 72-124 (CHGC…CGKC). Positions 152 to 239 (HISMPATTEG…TLQLLIEHDP (88 aa)) constitute a PDZ domain. Residues 280–304 (RRRSLRRSNSISKSPGPSSPKEPLL) are disordered. Residues 286-304 (RSNSISKSPGPSSPKEPLL) are compositionally biased toward low complexity. S293 and S298 each carry phosphoserine. A Protein kinase domain is found at 331–608 (LIHGEVLGKG…DFFEALSLYL (278 aa)). Residues 337–345 (LGKGFFGQA) and N360 each bind ATP. Residue D451 is part of the active site. T505 carries the post-translational modification Phosphothreonine; by ROCK1 and CDC42BP.

This sequence belongs to the protein kinase superfamily. TKL Ser/Thr protein kinase family. In terms of assembly, binds ROCK1 and MARF1. Interacts with NISCH. In terms of processing, phosphorylated on serine and/or threonine residues by ROCK1.

It localises to the cytoplasm. It is found in the cytoskeleton. The protein localises to the spindle. Its subcellular location is the microtubule organizing center. The protein resides in the centrosome. The enzyme catalyses L-seryl-[protein] + ATP = O-phospho-L-seryl-[protein] + ADP + H(+). It catalyses the reaction L-threonyl-[protein] + ATP = O-phospho-L-threonyl-[protein] + ADP + H(+). In terms of biological role, serine/threonine-protein kinase that plays an essential role in the regulation of actin filament dynamics. Acts downstream of several Rho family GTPase signal transduction pathways. Involved in astral microtubule organization and mitotic spindle orientation during early stages of mitosis by mediating phosphorylation of TPPP. Displays serine/threonine-specific phosphorylation of myelin basic protein and histone (MBP) in vitro. Suppresses ciliogenesis via multiple pathways; phosphorylation of CFL1, suppression of directional trafficking of ciliary vesicles to the ciliary base, and by facilitating YAP1 nuclear localization where it acts as a transcriptional corepressor of the TEAD4 target genes AURKA and PLK1. This Bos taurus (Bovine) protein is LIM domain kinase 2 (LIMK2).